The primary structure comprises 119 residues: Protein GSKIP homolog (119 aa).

Belongs to the GSKIP family.

The protein is Protein GSKIP homolog of Drosophila melanogaster (Fruit fly).